The sequence spans 375 residues: Phosphoribulokinase, chloroplastic (375 aa).

Residues Met-1–Ala-31 constitute a chloroplast transit peptide. Cys-47 and Cys-86 are disulfide-bonded.

This sequence belongs to the phosphoribulokinase family. Component of a complex that contains two dimers of PRK, two tetramers of GAPDH and CP12.

It localises to the plastid. The protein localises to the chloroplast. The enzyme catalyses D-ribulose 5-phosphate + ATP = D-ribulose 1,5-bisphosphate + ADP + H(+). It functions in the pathway carbohydrate biosynthesis; Calvin cycle. Its activity is regulated as follows. Light regulated via thioredoxin by reversible oxidation/reduction of sulfhydryl/disulfide groups. The polypeptide is Phosphoribulokinase, chloroplastic (PRKA) (Chlamydomonas reinhardtii (Chlamydomonas smithii)).